Here is a 356-residue protein sequence, read N- to C-terminus: Peptide chain release factor 1 (356 aa).

The residue at position 234 (Gln-234) is an N5-methylglutamine.

It belongs to the prokaryotic/mitochondrial release factor family. Methylated by PrmC. Methylation increases the termination efficiency of RF1.

Its subcellular location is the cytoplasm. In terms of biological role, peptide chain release factor 1 directs the termination of translation in response to the peptide chain termination codons UAG and UAA. The chain is Peptide chain release factor 1 from Parafrankia sp. (strain EAN1pec).